Reading from the N-terminus, the 405-residue chain is Glucose-1-phosphate adenylyltransferase 1 (405 aa).

Residues Tyr96, Gly161, 176–177, and Ser194 contribute to the alpha-D-glucose 1-phosphate site; that span reads EK.

The protein belongs to the bacterial/plant glucose-1-phosphate adenylyltransferase family. Homotetramer.

It carries out the reaction alpha-D-glucose 1-phosphate + ATP + H(+) = ADP-alpha-D-glucose + diphosphate. It participates in glycan biosynthesis; glycogen biosynthesis. Functionally, involved in the biosynthesis of ADP-glucose, a building block required for the elongation reactions to produce glycogen. Catalyzes the reaction between ATP and alpha-D-glucose 1-phosphate (G1P) to produce pyrophosphate and ADP-Glc. In Vibrio vulnificus (strain CMCP6), this protein is Glucose-1-phosphate adenylyltransferase 1.